A 431-amino-acid chain; its full sequence is Trigger factor (431 aa).

Residues 165 to 250 enclose the PPIase FKBP-type domain; that stretch reads GDTVVIDFDG…IHELKRKELP (86 aa).

This sequence belongs to the FKBP-type PPIase family. Tig subfamily.

It localises to the cytoplasm. The catalysed reaction is [protein]-peptidylproline (omega=180) = [protein]-peptidylproline (omega=0). In terms of biological role, involved in protein export. Acts as a chaperone by maintaining the newly synthesized protein in an open conformation. Functions as a peptidyl-prolyl cis-trans isomerase. This is Trigger factor from Leuconostoc mesenteroides subsp. mesenteroides (strain ATCC 8293 / DSM 20343 / BCRC 11652 / CCM 1803 / JCM 6124 / NCDO 523 / NBRC 100496 / NCIMB 8023 / NCTC 12954 / NRRL B-1118 / 37Y).